A 191-amino-acid polypeptide reads, in one-letter code: uncharacterized protein (191 aa).

The first 22 residues, 1-22, serve as a signal peptide directing secretion; sequence MKSLRLMLCAMPLMLTGCSTMS.

This is an uncharacterized protein from Escherichia coli (strain K12).